The primary structure comprises 714 residues: ATP-dependent DNA helicase DinG (714 aa).

A Helicase ATP-binding domain is found at 17–294; sequence ALQDQIPDFI…TSMEQFRPKT (278 aa). Position 54 to 61 (54 to 61) interacts with ATP; that stretch reads APTGVGKT. [4Fe-4S] cluster contacts are provided by cysteine 120, cysteine 194, cysteine 199, and cysteine 205. Positions 248 to 251 match the DEAH box motif; sequence DEGH. Residues 517–698 enclose the Helicase C-terminal domain; the sequence is HIAEMAAYFR…VFPIEQPAVP (182 aa).

This sequence belongs to the helicase family. DinG subfamily. Type 1 sub-subfamily. It depends on [4Fe-4S] cluster as a cofactor.

The catalysed reaction is Couples ATP hydrolysis with the unwinding of duplex DNA at the replication fork by translocating in the 5'-3' direction. This creates two antiparallel DNA single strands (ssDNA). The leading ssDNA polymer is the template for DNA polymerase III holoenzyme which synthesizes a continuous strand.. It catalyses the reaction ATP + H2O = ADP + phosphate + H(+). Its function is as follows. DNA-dependent ATPase and 5'-3' DNA helicase. Unwinds D-loops, R-loops, forked DNA and G-quadruplex DNA. The polypeptide is ATP-dependent DNA helicase DinG (Salmonella choleraesuis (strain SC-B67)).